A 1252-amino-acid chain; its full sequence is Plasma membrane calcium-transporting ATPase mca-1 (1252 aa).

At 1 to 121 (MQKSQNVTAV…VRLVLDACKD (121 aa)) the chain is on the cytoplasmic side. A helical transmembrane segment spans residues 122-142 (PTLVILVLSGFINLALSFYEP). The Extracellular portion of the chain corresponds to 143-180 (TSAAEDATQHLVNATTAAILANGTFMSTTEAPSEGHGT). N-linked (GlcNAc...) asparagine glycosylation is found at Asn155 and Asn164. A helical transmembrane segment spans residues 181-201 (AWIEGVAILLCVIVVVLVTAV). Over 202–376 (NDYSKERQFR…KSVLQAKLSK (175 aa)) the chain is Cytoplasmic. The segment at 330–361 (DDSTSTSSSSSSSSSSSGSSSNGSSDSSKSGD) is disordered. Low complexity predominate over residues 333–357 (TSTSSSSSSSSSSSGSSSNGSSDSS). A helical transmembrane segment spans residues 377–397 (LALQIIYCGTTIAIIALIVLV). At 398-422 (TRFCLDHYVFEKNEFSLVDIQMFVK) the chain is on the extracellular side. The chain crosses the membrane as a helical span at residues 423–443 (FFIIAVTILVISIPEGLPLAI). Ca(2+) contacts are provided by Val432, Ile435, and Glu437. The Cytoplasmic segment spans residues 444–879 (ALALTYSVRK…GRNVYDSISK (436 aa)). The active-site 4-aspartylphosphate intermediate is Asp479. Asp479 and Thr481 together coordinate Mg(2+). Positions 481, 553, 612, 733, 734, 735, 792, and 798 each coordinate ATP. Residue Asp822 coordinates Mg(2+). Asn825 provides a ligand contact to ATP. A helical transmembrane segment spans residues 880–900 (FLQFQLTVNVVAVITAFVGAV). Asn888 serves as a coordination point for Ca(2+). Residues 901–908 (TVSDSPLK) are Extracellular-facing. The chain crosses the membrane as a helical span at residues 909–929 (AVHMLWINLIMDTLASLALAT). Ca(2+) contacts are provided by Asn916 and Asp920. At 930–960 (EQPTDELLERKPYGRKKSLISRTMVKNILCH) the chain is on the cytoplasmic side. The helical transmembrane segment at 961 to 981 (ALYQLIIIFVIFFYGDTIFGI) threads the bilayer. Residues 982–989 (KTGLYAPL) are Extracellular-facing. Residues 990 to 1010 (FAPPSQHFTLVFNAFVMMTVF) traverse the membrane as a helical segment. At 1011 to 1035 (NEINARKVHGERNVFKGLASNRVFC) the chain is on the cytoplasmic side. The chain crosses the membrane as a helical span at residues 1036 to 1056 (VIWVTTFIAQIIIVQFGGAWF). Topologically, residues 1057-1065 (STAPLTLQQ) are extracellular. The chain crosses the membrane as a helical span at residues 1066–1086 (WIVCLVLGFSTLIWGQIVATI). At 1087–1252 (PSKKLPKAWK…NVDMEDIELN (166 aa)) the chain is on the cytoplasmic side. Residues 1124–1142 (LRRSGKSLWVRGMFIIGNH) form a calmodulin-binding subdomain A region. A calmodulin-binding subdomain B region spans residues 1143-1152 (LRVLRAFGME). Residues 1181 to 1252 (YRHQKHQEKK…NVDMEDIELN (72 aa)) are disordered.

This sequence belongs to the cation transport ATPase (P-type) (TC 3.A.3) family. Type IIB subfamily. As to quaternary structure, interacts with calmodulin.

The protein resides in the cell membrane. The catalysed reaction is Ca(2+)(in) + ATP + H2O = Ca(2+)(out) + ADP + phosphate + H(+). In terms of biological role, catalyzes the hydrolysis of ATP coupled with the transport of calcium across a membrane. The sequence is that of Plasma membrane calcium-transporting ATPase mca-1 from Caenorhabditis elegans.